We begin with the raw amino-acid sequence, 137 residues long: Large ribosomal subunit protein uL16 (137 aa).

Belongs to the universal ribosomal protein uL16 family. As to quaternary structure, part of the 50S ribosomal subunit.

In terms of biological role, binds 23S rRNA and is also seen to make contacts with the A and possibly P site tRNAs. This chain is Large ribosomal subunit protein uL16, found in Mesorhizobium japonicum (strain LMG 29417 / CECT 9101 / MAFF 303099) (Mesorhizobium loti (strain MAFF 303099)).